A 406-amino-acid chain; its full sequence is Succinylornithine transaminase (406 aa).

Lys-252 is modified (N6-(pyridoxal phosphate)lysine).

The protein belongs to the class-III pyridoxal-phosphate-dependent aminotransferase family. AstC subfamily. Requires pyridoxal 5'-phosphate as cofactor.

The enzyme catalyses N(2)-succinyl-L-ornithine + 2-oxoglutarate = N-succinyl-L-glutamate 5-semialdehyde + L-glutamate. The protein operates within amino-acid degradation; L-arginine degradation via AST pathway; L-glutamate and succinate from L-arginine: step 3/5. In terms of biological role, catalyzes the transamination of N(2)-succinylornithine and alpha-ketoglutarate into N(2)-succinylglutamate semialdehyde and glutamate. Can also act as an acetylornithine aminotransferase. The sequence is that of Succinylornithine transaminase from Escherichia coli O157:H7.